The sequence spans 272 residues: Neurogenin-2 (272 aa).

A disordered region spans residues 30 to 69 (LTPLSSSADEEEEEEPGASGGARRQRGAEAGQGARGGVAA). Positions 112-164 (TRRLKANNRERNRMHNLNAALDALREVLPTFPEDAKLTKIETLRFAHNYIWAL) constitute a bHLH domain. Positions 197 to 239 (ASAALSSSGDSPSPASTWSCTNSPAPSSSVSSNSTSPYSCTLS) are enriched in low complexity. Residues 197–264 (ASAALSSSGD…PPDKHRYAPH (68 aa)) form a disordered region.

Efficient DNA binding requires dimerization with another bHLH protein.

Its subcellular location is the nucleus. In terms of biological role, transcriptional regulator. Involved in neuronal differentiation. Activates transcription by binding to the E box (5'-CANNTG-3'). The chain is Neurogenin-2 (NEUROG2) from Homo sapiens (Human).